The chain runs to 151 residues: 1,4-dihydroxy-2-naphthoyl-CoA hydrolase (151 aa).

Residue aspartate 23 is part of the active site.

This sequence belongs to the 4-hydroxybenzoyl-CoA thioesterase family. DHNA-CoA hydrolase subfamily.

It catalyses the reaction 1,4-dihydroxy-2-naphthoyl-CoA + H2O = 1,4-dihydroxy-2-naphthoate + CoA + H(+). Its pathway is cofactor biosynthesis; phylloquinone biosynthesis. It participates in quinol/quinone metabolism; 1,4-dihydroxy-2-naphthoate biosynthesis; 1,4-dihydroxy-2-naphthoate from chorismate: step 7/7. Catalyzes the hydrolysis of 1,4-dihydroxy-2-naphthoyl-CoA (DHNA-CoA) to 1,4-dihydroxy-2-naphthoate (DHNA), a reaction involved in phylloquinone (vitamin K1) biosynthesis. This chain is 1,4-dihydroxy-2-naphthoyl-CoA hydrolase, found in Prochlorococcus marinus (strain MIT 9211).